We begin with the raw amino-acid sequence, 284 residues long: MYVVSTKQMLNNAQRGGYAVPAFNIHNLETMQVVVETAANLHAPVIIAGTPGTFTHAGTENLLALVSAMAKQYHHPLAIHLDHHTKFDDIAQKVRSGVRSVMIDASHLPFAQNISRVKEVVDFCHRFDVSVEAELGQLGGQEDDVQVNEADALYTNPAQAREFAEATGIDSLAVAIGTAHGMYASAPALDFSRLENIRQWVNLPLVLHGASGLSTKDIQQTIKLGICKINVATELKNAFSQALKNYLTEHPEATDPRDYLQSAKSAMRDVVSKVIADCGCEGRA.

Aspartate 82 functions as the Proton donor in the catalytic mechanism. Histidine 83 and histidine 180 together coordinate Zn(2+). Glycine 181 is a dihydroxyacetone phosphate binding site. A Zn(2+)-binding site is contributed by histidine 208. Dihydroxyacetone phosphate-binding positions include 209–211 (GAS) and 230–233 (NVAT).

Belongs to the class II fructose-bisphosphate aldolase family. TagBP aldolase GatY subfamily. As to quaternary structure, forms a complex with GatZ. Requires Zn(2+) as cofactor.

It carries out the reaction D-tagatofuranose 1,6-bisphosphate = D-glyceraldehyde 3-phosphate + dihydroxyacetone phosphate. It functions in the pathway carbohydrate metabolism; D-tagatose 6-phosphate degradation; D-glyceraldehyde 3-phosphate and glycerone phosphate from D-tagatose 6-phosphate: step 2/2. Functionally, catalytic subunit of the tagatose-1,6-bisphosphate aldolase GatYZ, which catalyzes the reversible aldol condensation of dihydroxyacetone phosphate (DHAP or glycerone-phosphate) with glyceraldehyde 3-phosphate (G3P) to produce tagatose 1,6-bisphosphate (TBP). Requires GatZ subunit for full activity and stability. Is involved in the catabolism of galactitol. This is D-tagatose-1,6-bisphosphate aldolase subunit GatY from Escherichia coli (strain K12 / MC4100 / BW2952).